The following is a 303-amino-acid chain: N-acetyl-D-glucosamine kinase (303 aa).

ATP contacts are provided by residues 4–11 and 133–140; these read GFDIGGTK and GVGGGLVL. Zn(2+) contacts are provided by H157, C177, C179, and C184.

It belongs to the ROK (NagC/XylR) family. NagK subfamily.

The enzyme catalyses N-acetyl-D-glucosamine + ATP = N-acetyl-D-glucosamine 6-phosphate + ADP + H(+). The protein operates within cell wall biogenesis; peptidoglycan recycling. Its function is as follows. Catalyzes the phosphorylation of N-acetyl-D-glucosamine (GlcNAc) derived from cell-wall degradation, yielding GlcNAc-6-P. In Salmonella paratyphi B (strain ATCC BAA-1250 / SPB7), this protein is N-acetyl-D-glucosamine kinase.